The following is a 426-amino-acid chain: Metacaspase-1B (426 aa).

The segment covering 1 to 14 has biased composition (gly residues); it reads MSGYPGAGYNGGGY. The disordered stretch occupies residues 1-111; sequence MSGYPGAGYN…QAPPPPPQAP (111 aa). The span at 21-68 shows a compositional bias: low complexity; sequence QYGGYYPPQPAYNAYQQPPPQQQQYMVYHQPSPGPQQHQHWNPQQQTP. Active-site residues include His217 and Cys273.

This sequence belongs to the peptidase C14B family.

Its function is as follows. Involved in cell death (apoptosis). This chain is Metacaspase-1B (casB), found in Neurospora crassa (strain ATCC 24698 / 74-OR23-1A / CBS 708.71 / DSM 1257 / FGSC 987).